The chain runs to 381 residues: Homoserine O-succinyltransferase (381 aa).

One can recognise an AB hydrolase-1 domain in the interval 45-360 (NAVLVCHALN…PHGHDAFLLD (316 aa)). Residue Ser151 is the Nucleophile of the active site. Arg221 contributes to the substrate binding site. Residues Asp321 and His354 contribute to the active site. Asp355 is a substrate binding site.

Belongs to the AB hydrolase superfamily. MetX family. Homodimer.

The protein localises to the cytoplasm. The catalysed reaction is L-homoserine + succinyl-CoA = O-succinyl-L-homoserine + CoA. It functions in the pathway amino-acid biosynthesis; L-methionine biosynthesis via de novo pathway; O-succinyl-L-homoserine from L-homoserine: step 1/1. Functionally, transfers a succinyl group from succinyl-CoA to L-homoserine, forming succinyl-L-homoserine. The protein is Homoserine O-succinyltransferase of Paraburkholderia phymatum (strain DSM 17167 / CIP 108236 / LMG 21445 / STM815) (Burkholderia phymatum).